Reading from the N-terminus, the 610-residue chain is Major facilitator superfamily multidrug transporter FLU1 (610 aa).

2 N-linked (GlcNAc...) asparagine glycosylation sites follow: Asn3 and Asn21. The span at 47 to 58 (GPTDSVESSSNT) shows a compositional bias: polar residues. A disordered region spans residues 47-74 (GPTDSVESSSNTADEENEINSFNAQNVK). Transmembrane regions (helical) follow at residues 165 to 185 (ILYCASVGLAALSVSMGSAMF), 209 to 229 (LFVFGFASGPVIYGPLSELFG), 231 to 251 (KLVMVPSCLGYVCFSFAVATA), 262 to 282 (FFAGFIGAAPLVVAPAVMADM), 292 to 312 (IAIFSMLLFGGPMLAPILGAF), 323 to 343 (WTSYFCGIIGSLALFMNTFLL), 408 to 428 (AFIYGMLYLFLTAIPLIFLGE), 437 to 457 (ELPYLAMLIGILIGGGMIMLF), 478 to 498 (LEPMMVGGFTFVIGIFWLGWT), 507 to 527 (WIVPVIGAAFVGNGLMLIFLP), and 530 to 550 (NYIIDCYLLYAATALAGNTFI). N-linked (GlcNAc...) asparagine glycosylation is present at Asn568. A helical transmembrane segment spans residues 573–593 (WASTLLGCIGILLLPMPFVFY).

The protein belongs to the major facilitator superfamily. DHA1 family. Polyamines/proton antiporter (TC 2.A.1.2.16) subfamily.

Its subcellular location is the cell membrane. Major facilitator superfamily transporter that mediates resistance to structurally and functionally unrelated compounds including cycloheximide but also azoles such as fuconazole, ketoconazole and itraconazole. Also mediates efflux of histatin 5, a salivary human antimicrobial peptide, and is responsible for reduction of its toxicity in C.albicans. This chain is Major facilitator superfamily multidrug transporter FLU1, found in Candida albicans (strain SC5314 / ATCC MYA-2876) (Yeast).